The chain runs to 311 residues: UDP-N-acetylenolpyruvoylglucosamine reductase (311 aa).

Residues 28–197 enclose the FAD-binding PCMH-type domain; that stretch reads KIGGNARWLV…VSARFHLARG (170 aa). The active site involves arginine 177. Residue serine 226 is the Proton donor of the active site. Glutamate 296 is an active-site residue.

It belongs to the MurB family. FAD serves as cofactor.

The protein localises to the cytoplasm. It catalyses the reaction UDP-N-acetyl-alpha-D-muramate + NADP(+) = UDP-N-acetyl-3-O-(1-carboxyvinyl)-alpha-D-glucosamine + NADPH + H(+). The protein operates within cell wall biogenesis; peptidoglycan biosynthesis. In terms of biological role, cell wall formation. The chain is UDP-N-acetylenolpyruvoylglucosamine reductase from Magnetococcus marinus (strain ATCC BAA-1437 / JCM 17883 / MC-1).